Consider the following 493-residue polypeptide: Ferruginol synthase 1 (493 aa).

A helical membrane pass occupies residues 2-22 (DSFPLLAALFFILAATWFISF). Cys-437 lines the heme pocket.

Belongs to the cytochrome P450 family. Requires heme as cofactor. In terms of tissue distribution, expressed in leaf glandular trichomes.

Its subcellular location is the membrane. The enzyme catalyses abieta-8,11,13-triene + reduced [NADPH--hemoprotein reductase] + O2 = ferruginol + oxidized [NADPH--hemoprotein reductase] + H2O + H(+). It carries out the reaction ferruginol + reduced [NADPH--hemoprotein reductase] + O2 = 11-hydroxyferruginol + oxidized [NADPH--hemoprotein reductase] + H2O + H(+). The catalysed reaction is miltiradiene + 2 reduced [NADPH--hemoprotein reductase] + 2 O2 = 11-oxomiltiradiene + 2 oxidized [NADPH--hemoprotein reductase] + 3 H2O + 2 H(+). The protein operates within secondary metabolite biosynthesis; terpenoid biosynthesis. Functionally, monooxygenase involved in the biosynthesis of labdane-related diterpenes natural products. Catalyzes the oxidation of abietatriene to produce ferruginol. Catalyzes the oxidation of ferruginol at C-12 to produce 11-hydroxyferruginol. Ferruginol and 11-hydroxyferruginol are intermediates in the biosynthesis of carnosate, a potent antioxidant. May also convert miltiradiene into 11-oxomiltiradiene. This chain is Ferruginol synthase 1, found in Rosmarinus officinalis (Rosemary).